The sequence spans 255 residues: Protein PH0439 (255 aa).

Belongs to the CinA family.

This Pyrococcus horikoshii (strain ATCC 700860 / DSM 12428 / JCM 9974 / NBRC 100139 / OT-3) protein is Protein PH0439.